A 613-amino-acid polypeptide reads, in one-letter code: MGKEKKTESYNNDSGSYNYRMFKFYNRKFKINEVTPTDDVRDAFCQFAVGGGGGGTDGDSSDGDGSTGVMGAEQLCSFLDDHGESTTVAEAQRLIDEVIRRRHHVTRFTRHGLDLDDFFNFLFYDDLNPPITPHVHQDMTAPLSHYFIYTGHNSYLTGNQLSSDCSEVPVIKALQRGVRVIELDLWPNSTGTDINVLHGRTLTTPVPLMKCLKSIRDYAFSSSPYPVIITLEDHLTPDLQAKVAEMATQIFGQMLYYPESDSLLEFPSPASLLHRIIISTKPPKEYLESRNPIVKQKDNNVSPSSEDETPRTEEIQTLESMLFDQDFESKSDSDQEDEEASEDQKPAYKRLITIHAGKPKGTVKEEMKVVVDKVRRLSLSEQELDRTCSSNSQDVVRFTQRNLLRIYPKGTRFNSSNYKPLIGWTHGAQMIAFNMQGYGKSLWLMHGMFRANGGCGYVKKPNFLMKKGFHDEVFDPRKKLPVKETLKVKVYMGDGWRMDFSHTHFDAYSPPDFYTKMFIVGVPADNAKKKTKIIEDNWYPIWDEEFSFPLTVPELALLRIEVREYDMSEKDDFGGQTCLPVAELRPGIRSVPLYDKKGEKMKSVRLLMRFIFE.

Positions 137–281 (QDMTAPLSHY…LLHRIIISTK (145 aa)) constitute a PI-PLC X-box domain. Active-site residues include histidine 152 and histidine 198. Positions 288 to 349 (ESRNPIVKQK…ASEDQKPAYK (62 aa)) are disordered. In terms of domain architecture, PI-PLC Y-box spans 349 to 465 (KRLITIHAGK…GYVKKPNFLM (117 aa)). Positions 466–595 (KKGFHDEVFD…PGIRSVPLYD (130 aa)) constitute a C2 domain.

Requires Ca(2+) as cofactor. Expressed in leaves, flowers and siliques, but not in roots.

Its subcellular location is the cell membrane. The catalysed reaction is a 1,2-diacyl-sn-glycero-3-phospho-(1D-myo-inositol-4,5-bisphosphate) + H2O = 1D-myo-inositol 1,4,5-trisphosphate + a 1,2-diacyl-sn-glycerol + H(+). In terms of biological role, the production of the second messenger molecules diacylglycerol (DAG) and inositol 1,4,5-trisphosphate (IP3) is mediated by activated phosphatidylinositol-specific phospholipase C enzymes. In Arabidopsis thaliana (Mouse-ear cress), this protein is Phosphoinositide phospholipase C 6 (PLC6).